Reading from the N-terminus, the 545-residue chain is CTP synthase (545 aa).

An amidoligase domain region spans residues 1 to 266 (MTTNYIFVTG…DDYICKRFSL (266 aa)). Residue Ser14 coordinates CTP. Ser14 is a UTP binding site. ATP is bound by residues 15–20 (SLGKGI) and Asp72. Mg(2+) is bound by residues Asp72 and Glu140. Residues 147-149 (DIE), 187-192 (KTKPTQ), and Lys223 each bind CTP. UTP is bound by residues 187-192 (KTKPTQ) and Lys223. 239-241 (KDV) contributes to the ATP binding site. One can recognise a Glutamine amidotransferase type-1 domain in the interval 291–542 (TIGMVGKYIE…VKAASEHQKR (252 aa)). Residue Gly352 coordinates L-glutamine. The Nucleophile; for glutamine hydrolysis role is filled by Cys379. L-glutamine is bound by residues 380–383 (LGMQ), Glu403, and Arg470. Catalysis depends on residues His515 and Glu517.

It belongs to the CTP synthase family. Homotetramer.

It carries out the reaction UTP + L-glutamine + ATP + H2O = CTP + L-glutamate + ADP + phosphate + 2 H(+). It catalyses the reaction L-glutamine + H2O = L-glutamate + NH4(+). The enzyme catalyses UTP + NH4(+) + ATP = CTP + ADP + phosphate + 2 H(+). It functions in the pathway pyrimidine metabolism; CTP biosynthesis via de novo pathway; CTP from UDP: step 2/2. Allosterically activated by GTP, when glutamine is the substrate; GTP has no effect on the reaction when ammonia is the substrate. The allosteric effector GTP functions by stabilizing the protein conformation that binds the tetrahedral intermediate(s) formed during glutamine hydrolysis. Inhibited by the product CTP, via allosteric rather than competitive inhibition. Functionally, catalyzes the ATP-dependent amination of UTP to CTP with either L-glutamine or ammonia as the source of nitrogen. Regulates intracellular CTP levels through interactions with the four ribonucleotide triphosphates. This is CTP synthase from Salmonella arizonae (strain ATCC BAA-731 / CDC346-86 / RSK2980).